Consider the following 953-residue polypeptide: Calcium-transporting ATPase type 2C member 1 (953 aa).

Residues 1 to 104 (MDNLLPQSRF…NEFDISEDEP (104 aa)) are Cytoplasmic-facing. The chain crosses the membrane as a helical span at residues 105 to 125 (LWKKYISQFKNPLIMLLLASA). The Lumenal segment spans residues 126–138 (VISVLMHQFDDAV). A helical transmembrane segment spans residues 139–157 (SITVAILIVVTVAFVQEYR). At 158–296 (SEKSLEELSK…APKTPLQKSM (139 aa)) the chain is on the cytoplasmic side. Residues 297-316 (DLLGKQLSFYSFGIIGIIML) form a helical membrane-spanning segment. Residues 317–328 (VGWLLGKDILEM) are Lumenal-facing. The helical transmembrane segment at 329 to 346 (FTISVSLAVAAIPEGLPI) threads the bilayer. The Ca(2+) site is built by Val337, Ala338, Ile340, and Glu342. Residues 347-733 (VVTVTLALGV…EEGKGIYNNI (387 aa)) lie on the Cytoplasmic side of the membrane. Asp384 acts as the 4-aspartylphosphate intermediate in catalysis. Residues Asp678 and Asp682 each coordinate Mg(2+). A helical transmembrane segment spans residues 734–753 (KNFVRFQLSTSIAALTLISL). Residues 754 to 763 (ATLMNFPNPL) are Lumenal-facing. Residues 764–784 (NAMQILWINIIMDGPPAQSLG) traverse the membrane as a helical segment. Residues Asn772 and Asp776 each contribute to the Ca(2+) site. At 785–804 (VEPVDKDVIRKPPRNWKDSI) the chain is on the cytoplasmic side. The chain crosses the membrane as a helical span at residues 805 to 824 (LTKNLILKILVSSIIIVCGT). Over 825-842 (LFVFWRELRDNVITPRDT) the chain is Lumenal. Residues 843-862 (TMTFTCFVFFDMFNALSSRS) traverse the membrane as a helical segment. Topologically, residues 863 to 875 (QTKSVFEIGLCSN) are cytoplasmic. Residues 876–894 (KMFCYAVLGSIMGQLLVIY) form a helical membrane-spanning segment. At 895–909 (FPPLQKVFQTESLSI) the chain is on the lumenal side. Residues 910–930 (LDLLFLLGLTSSVCIVAEIIK) form a helical membrane-spanning segment. The Cytoplasmic segment spans residues 931–953 (KVERSREKIQKPVSSTSSSFLEV).

Belongs to the cation transport ATPase (P-type) (TC 3.A.3) family. Type IIA subfamily. In terms of assembly, monomer. Homodimer.

The protein resides in the golgi apparatus. It localises to the trans-Golgi network membrane. Its subcellular location is the golgi stack membrane. It catalyses the reaction Ca(2+)(in) + ATP + H2O = Ca(2+)(out) + ADP + phosphate + H(+). It carries out the reaction Mn(2+)(in) + ATP + H2O = Mn(2+)(out) + ADP + phosphate + H(+). Its function is as follows. ATP-driven pump that supplies the Golgi apparatus with Ca(2+) and Mn(2+) ions, both essential cofactors for processing and trafficking of newly synthesized proteins in the secretory pathway. Within a catalytic cycle, acquires Ca(2+) or Mn(2+) ions on the cytoplasmic side of the membrane and delivers them to the lumenal side. The transfer of ions across the membrane is coupled to ATP hydrolysis and is associated with a transient phosphorylation that shifts the pump conformation from inward-facing to outward-facing state. Plays a primary role in the maintenance of Ca(2+) homeostasis in the trans-Golgi compartment with a functional impact on Golgi and post-Golgi protein sorting as well as a structural impact on cisternae morphology. Responsible for loading the Golgi stores with Ca(2+) ions in keratinocytes, contributing to keratinocyte differentiation and epidermis integrity. Participates in Ca(2+) and Mn(2+) ions uptake into the Golgi store of hippocampal neurons and regulates protein trafficking required for neural polarity. May also play a role in the maintenance of Ca(2+) and Mn(2+) homeostasis and signaling in the cytosol while preventing cytotoxicity. This chain is Calcium-transporting ATPase type 2C member 1 (ATP2C1), found in Bos taurus (Bovine).